Consider the following 390-residue polypeptide: Cystathionine beta-lyase (390 aa).

Lysine 202 is modified (N6-(pyridoxal phosphate)lysine).

Belongs to the trans-sulfuration enzymes family. Pyridoxal 5'-phosphate is required as a cofactor.

The protein localises to the cytoplasm. Its subcellular location is the nucleus. It catalyses the reaction L,L-cystathionine + H2O = L-homocysteine + pyruvate + NH4(+). It carries out the reaction an S-substituted L-cysteine + H2O = a thiol + pyruvate + NH4(+). The protein operates within amino-acid biosynthesis; L-methionine biosynthesis via de novo pathway; L-homocysteine from L-cystathionine: step 1/1. This Schizosaccharomyces pombe (strain 972 / ATCC 24843) (Fission yeast) protein is Cystathionine beta-lyase (str3).